The following is a 283-amino-acid chain: Putative 4-diphosphocytidyl-2-C-methyl-D-erythritol kinase (283 aa).

Lys-11 is a catalytic residue. Residue 95-105 (PVCAGMGGGSS) coordinates ATP. Asp-137 is an active-site residue.

This sequence belongs to the GHMP kinase family. IspE subfamily.

The catalysed reaction is 4-CDP-2-C-methyl-D-erythritol + ATP = 4-CDP-2-C-methyl-D-erythritol 2-phosphate + ADP + H(+). Catalyzes the phosphorylation of the position 2 hydroxy group of 4-diphosphocytidyl-2C-methyl-D-erythritol. This is Putative 4-diphosphocytidyl-2-C-methyl-D-erythritol kinase from Streptococcus equi subsp. equi (strain 4047).